Consider the following 320-residue polypeptide: Myoblast determination protein 1 (320 aa).

Met-1 participates in a covalent cross-link: Peptide (Met-Gly) (interchain with G-Cter in ubiquitin). N6-methyllysine; by EHMT2 is present on Lys-104. One can recognise a bHLH domain in the interval 109–160; that stretch reads DRRKAATMRERRRLSKVNEAFETLKRCTSSNPNQRLPKVEILRNAIRYIEGL. Disordered stretches follow at residues 174–219 and 262–320; these read AAAA…PPSG and ESPA…YQVL. Polar residues-rich tracts occupy residues 197–207 and 291–301; these read SDASSPRSNCS and GESSGDPTQSP.

In terms of assembly, efficient DNA binding requires dimerization with another bHLH protein. Seems to form active heterodimers with ITF-2. Interacts with SUV39H1. Interacts with DDX5. Interacts with CHD2. Interacts with TSC22D3. Interacts with SETD3. Interacts with P-TEFB complex; promotes the transcriptional activity of MYOD1 through its CDK9-mediated phosphorylation. Interacts with CSRP3. Interacts with NUPR1. Post-translationally, phosphorylated by CDK9. This phosphorylation promotes its function in muscle differentiation. In terms of processing, acetylated by a complex containing EP300 and PCAF. The acetylation is essential to activate target genes. Conversely, its deacetylation by SIRT1 inhibits its function. Ubiquitinated on the N-terminus; which is required for proteasomal degradation. Post-translationally, methylation at Lys-104 by EHMT2/G9a inhibits myogenic activity.

It is found in the nucleus. Its function is as follows. Acts as a transcriptional activator that promotes transcription of muscle-specific target genes and plays a role in muscle differentiation. Together with MYF5 and MYOG, co-occupies muscle-specific gene promoter core region during myogenesis. Induces fibroblasts to differentiate into myoblasts. Interacts with and is inhibited by the twist protein. This interaction probably involves the basic domains of both proteins. The sequence is that of Myoblast determination protein 1 (MYOD1) from Homo sapiens (Human).